We begin with the raw amino-acid sequence, 101 residues long: RNA-binding protein Hfq (101 aa).

A Sm domain is found at 9 to 68 (DPFLNALRRERVPVSIYLVNGIKLQGQVESFDQFVILLKNTVSQMVYKHAISTVVPSRPV). Positions 63-101 (VPSRPVSHHSNNPSGSTNNYHGSNPSAPQQPQQDSDDAE) are disordered. A compositionally biased stretch (polar residues) spans 70–86 (HHSNNPSGSTNNYHGSN).

This sequence belongs to the Hfq family. Homohexamer.

RNA chaperone that binds small regulatory RNA (sRNAs) and mRNAs to facilitate mRNA translational regulation in response to envelope stress, environmental stress and changes in metabolite concentrations. Also binds with high specificity to tRNAs. Positively regulates the expression of the yst gene for heat-stable enterotoxin (Y-ST). The polypeptide is RNA-binding protein Hfq (Yersinia enterocolitica).